The sequence spans 87 residues: NADH dehydrogenase [ubiquinone] 1 alpha subcomplex subunit 4-like 2 (87 aa).

It belongs to the complex I NDUFA4 subunit family.

The sequence is that of NADH dehydrogenase [ubiquinone] 1 alpha subcomplex subunit 4-like 2 (NDUFA4L2) from Bos taurus (Bovine).